The primary structure comprises 65 residues: Small ribosomal subunit protein eS31 (65 aa).

Residues Cys-36, Cys-39, Cys-55, and Cys-58 each coordinate Zn(2+). Residues 36-58 (CPKCGSVMAFHREPVPRWHCGKC) form a C4-type zinc finger.

It belongs to the eukaryotic ribosomal protein eS31 family. As to quaternary structure, part of the 30S ribosomal subunit. Zn(2+) is required as a cofactor.

The sequence is that of Small ribosomal subunit protein eS31 from Pyrobaculum calidifontis (strain DSM 21063 / JCM 11548 / VA1).